The sequence spans 132 residues: Large-conductance mechanosensitive channel (132 aa).

Transmembrane regions (helical) follow at residues 8–28 (FALK…GAFG), 30–50 (IVSS…LGGV), and 67–87 (GAFI…FLFI).

Belongs to the MscL family. Homopentamer.

The protein resides in the cell membrane. Channel that opens in response to stretch forces in the membrane lipid bilayer. May participate in the regulation of osmotic pressure changes within the cell. This chain is Large-conductance mechanosensitive channel, found in Bacillus cytotoxicus (strain DSM 22905 / CIP 110041 / 391-98 / NVH 391-98).